Reading from the N-terminus, the 94-residue chain is MNLNMLHDNVLIEALEESLNNSPIQLPESAKKKPTKGKVVAVGPGSYNNNGNLIPMTLKVGDVVFYRQWAGNEVEFSDKKYIVMKESDIIAKEV.

The protein belongs to the GroES chaperonin family. As to quaternary structure, heptamer of 7 subunits arranged in a ring. Interacts with the chaperonin GroEL.

It is found in the cytoplasm. Functionally, together with the chaperonin GroEL, plays an essential role in assisting protein folding. The GroEL-GroES system forms a nano-cage that allows encapsulation of the non-native substrate proteins and provides a physical environment optimized to promote and accelerate protein folding. GroES binds to the apical surface of the GroEL ring, thereby capping the opening of the GroEL channel. The polypeptide is Co-chaperonin GroES (Ehrlichia ruminantium (strain Gardel)).